Here is a 260-residue protein sequence, read N- to C-terminus: Mitochondrial import inner membrane translocase subunit Tim29 (260 aa).

The transit peptide at 1 to 31 (MAAAALRRFWSRRRAEAGDAVVAKPGVWARL) directs the protein to the mitochondrion. Topologically, residues 32–59 (GSWARALLRDYAEACRDASAEARARPGR) are mitochondrial matrix. Residues 60 to 77 (AAVYVGLLGGAAACFTLA) traverse the membrane as a helical segment. The Mitochondrial intermembrane segment spans residues 78–260 (PSEGAFEEAL…HSLVQAEAPR (183 aa)).

As to quaternary structure, component of the TIM22 complex, which core is composed of TIMM22, associated with TIMM10 (TIMM10A and/or TIMM10B), TIMM9, AGK and TIMM29. Interacts with TIMM10B; the interaction is direct. Interacts with TOMM40; linking the TIM22 complex to the TOM complex. Interacts with TIMM22 (when oxidized); the interaction is direct.

It localises to the mitochondrion inner membrane. Functionally, component of the TIM22 complex, a complex that mediates the import and insertion of multi-pass transmembrane proteins into the mitochondrial inner membrane. The TIM22 complex forms a twin-pore translocase that uses the membrane potential as the external driving force. Required for the stability of the TIM22 complex and functions in the assembly of the TIMM22 protein into the TIM22 complex. May facilitate cooperation between TIM22 and TOM complexes by interacting with TOMM40. In Homo sapiens (Human), this protein is Mitochondrial import inner membrane translocase subunit Tim29.